The primary structure comprises 193 residues: Protein B4 (193 aa).

A run of 3 helical transmembrane segments spans residues 15–35, 36–56, and 160–180; these read FFVCIFLCVFFCVCIFLCVFF, CVYFFVCVFFCVCFFVCVFFV, and LSLCGSAFCLSFSLARAIVFS.

The protein resides in the host membrane. This Homo sapiens (Human) protein is Protein B4 (B4).